Here is a 377-residue protein sequence, read N- to C-terminus: Gibberellin 20 oxidase 1 (377 aa).

In terms of domain architecture, Fe2OG dioxygenase spans 222 to 322 (ENDSIMRLNY…RKSLAFFLCP (101 aa)). Residues His-247, Asp-249, and His-303 each coordinate Fe cation. Arg-313 is a catalytic residue.

The protein belongs to the iron/ascorbate-dependent oxidoreductase family. GA20OX subfamily. Requires Fe(2+) as cofactor. L-ascorbate serves as cofactor. Highly expressed in stems and inflorescence tissues. Detected in seeds, roots, leaves and siliques.

The enzyme catalyses gibberellin A12 + 2 2-oxoglutarate + 3 O2 + H(+) = gibberellin A9 + 2 succinate + 3 CO2 + 2 H2O. It carries out the reaction gibberellin A12 + 2-oxoglutarate + O2 = gibberellin A15 + succinate + CO2. The catalysed reaction is gibberellin A15 + 2-oxoglutarate + O2 = gibberellin A24 + succinate + CO2 + H2O. It catalyses the reaction gibberellin A53 + 2-oxoglutarate + O2 = gibberellin A44 + succinate + CO2. It functions in the pathway plant hormone biosynthesis; gibberellin biosynthesis. Its function is as follows. Key oxidase enzyme in the biosynthesis of gibberellin that catalyzes the conversion of GA12 to GA9, via a three-step oxidation at C-20 of the GA skeleton. GA53 is less effectively oxidized than GA12 and is only oxidized one step to GA44. Involved in the promotion of the floral transition, fertility and silique elongation, but plays only a minor role in elongation of seedling organs. Acts redundantly with GA20OX2. The sequence is that of Gibberellin 20 oxidase 1 (GA20OX1) from Arabidopsis thaliana (Mouse-ear cress).